A 235-amino-acid polypeptide reads, in one-letter code: Probable transcriptional regulatory protein JJD26997_0557 (235 aa).

The protein belongs to the TACO1 family.

It is found in the cytoplasm. This chain is Probable transcriptional regulatory protein JJD26997_0557, found in Campylobacter jejuni subsp. doylei (strain ATCC BAA-1458 / RM4099 / 269.97).